The chain runs to 356 residues: MSFNSFGRVFRFSTWGESHGPAIGAVVDGCPPGLELSEADIQPWLDKRRPGTSRFTTQRQEPDQVRILSGVFEGRTTGTPISLMIDNVDQRSKDYSEVALAYRPGHADYAYDAKYGFRDHRGGGRSSARETASRVAAGAVARLVIPEVRIRAYLIELGGDRIDPAAFDDAAIDENPFFCPDRAAAARWEAIVDDARKAGSSVGAVVECVAEGVPAGWGAPLYAKLDSELAAACMSINAVKGVEIGDGFAAARLTGETNADPMRPGNDGKPVFLANHAGGIAGGIATGQPVVVRIALKPTSSILTPVETIGRDGKAADIRTKGRHDPCVGIRAAPVLEAMVALVLADQKLLHRAQIG.

Residues Arg-48 and Arg-54 each coordinate NADP(+). FMN-binding positions include 125-127, 237-238, Gly-282, 297-301, and Arg-323; these read RSS, NA, and KPTSS.

It belongs to the chorismate synthase family. Homotetramer. The cofactor is FMNH2.

The catalysed reaction is 5-O-(1-carboxyvinyl)-3-phosphoshikimate = chorismate + phosphate. The protein operates within metabolic intermediate biosynthesis; chorismate biosynthesis; chorismate from D-erythrose 4-phosphate and phosphoenolpyruvate: step 7/7. Catalyzes the anti-1,4-elimination of the C-3 phosphate and the C-6 proR hydrogen from 5-enolpyruvylshikimate-3-phosphate (EPSP) to yield chorismate, which is the branch point compound that serves as the starting substrate for the three terminal pathways of aromatic amino acid biosynthesis. This reaction introduces a second double bond into the aromatic ring system. This chain is Chorismate synthase, found in Rhizorhabdus wittichii (strain DSM 6014 / CCUG 31198 / JCM 15750 / NBRC 105917 / EY 4224 / RW1) (Sphingomonas wittichii).